The chain runs to 527 residues: MSVQIFGDQVTEERAENARLSAFVGAIAVGDLVKSTLGPKGMDKLLQSASSNTCMVTNDGATILKSIPLDNPAAKVLVNISKVQDDEVGDGTTSVTVLSAELLREAEKLIDQSKIHPQTIIEGYRLASAAALDALTKAAVDNSHDKTMFREDLIHIAKTTLSSKILSQDKDHFAELATNAILRLKGSTNLEHIQIIKILGGKLSDSFLDEGFILAKKFGNNQPKRIENAKILIANTTLDTDKVKIFGTKFKVDSTAKLAQLEKAEREKMKNKIAKISKFGINTFINRQLIYDYPEQLFTDLGINSIEHADFEGVERLALVTGGEVVSTFDEPSKCKLGECDVIEEIMLGEQPFLKFSGCKAGEACTIVLRGATDQTLDEAERSLHDALSVLSQTTKETRTVLGGGCAEMVMSKAVDTEAQNIDGKKSLAVEAFARALRQLPTILADNAGFDSSELVSKLRSSIYNGISTSGLDLNNGTIADMRQLGIVESYKLKRAVVSSASEAAEVLLRVDNIIRARPRTANRQHM.

Ser2 bears the N-acetylserine mark.

The protein belongs to the TCP-1 chaperonin family. In terms of assembly, heterooligomeric complex of about 850 to 900 kDa that forms two stacked rings, 12 to 16 nm in diameter. Interacts with PLP2; this interaction leads to inhibition of CCT complex mediated actin folding.

The protein resides in the cytoplasm. Its function is as follows. Molecular chaperone; assists the folding of proteins upon ATP hydrolysis. Known to play a role, in vitro, in the folding of actin and tubulin. In yeast may play a role in mitotic spindle formation. The polypeptide is T-complex protein 1 subunit beta (CCT2) (Saccharomyces cerevisiae (strain ATCC 204508 / S288c) (Baker's yeast)).